Here is a 199-residue protein sequence, read N- to C-terminus: 7-methyl-GTP pyrophosphatase (199 aa).

Asp76 functions as the Proton acceptor in the catalytic mechanism.

It belongs to the Maf family. YceF subfamily. It depends on a divalent metal cation as a cofactor.

The protein localises to the cytoplasm. It carries out the reaction N(7)-methyl-GTP + H2O = N(7)-methyl-GMP + diphosphate + H(+). Nucleoside triphosphate pyrophosphatase that hydrolyzes 7-methyl-GTP (m(7)GTP). May have a dual role in cell division arrest and in preventing the incorporation of modified nucleotides into cellular nucleic acids. The polypeptide is 7-methyl-GTP pyrophosphatase (Rhizobium meliloti (strain 1021) (Ensifer meliloti)).